Reading from the N-terminus, the 468-residue chain is Soluble pyridine nucleotide transhydrogenase (468 aa).

FAD is bound at residue 38-47 (ERHYNVGGGC).

It belongs to the class-I pyridine nucleotide-disulfide oxidoreductase family. FAD serves as cofactor.

It is found in the cytoplasm. The catalysed reaction is NAD(+) + NADPH = NADH + NADP(+). In terms of biological role, conversion of NADPH, generated by peripheral catabolic pathways, to NADH, which can enter the respiratory chain for energy generation. In Pectobacterium atrosepticum (strain SCRI 1043 / ATCC BAA-672) (Erwinia carotovora subsp. atroseptica), this protein is Soluble pyridine nucleotide transhydrogenase.